The chain runs to 460 residues: Phosphomethylpyrimidine synthase (460 aa).

Residues asparagine 80, methionine 109, tyrosine 138, histidine 174, 194–196 (SRG), 235–238 (DSLR), and glutamate 274 each bind substrate. Histidine 278 is a binding site for Zn(2+). Substrate is bound at residue tyrosine 301. Histidine 342 is a binding site for Zn(2+). [4Fe-4S] cluster-binding residues include cysteine 422, cysteine 425, and cysteine 430.

This sequence belongs to the ThiC family. In terms of assembly, homodimer. Requires [4Fe-4S] cluster as cofactor.

The enzyme catalyses 5-amino-1-(5-phospho-beta-D-ribosyl)imidazole + S-adenosyl-L-methionine = 4-amino-2-methyl-5-(phosphooxymethyl)pyrimidine + CO + 5'-deoxyadenosine + formate + L-methionine + 3 H(+). Its pathway is cofactor biosynthesis; thiamine diphosphate biosynthesis. In terms of biological role, catalyzes the synthesis of the hydroxymethylpyrimidine phosphate (HMP-P) moiety of thiamine from aminoimidazole ribotide (AIR) in a radical S-adenosyl-L-methionine (SAM)-dependent reaction. The sequence is that of Phosphomethylpyrimidine synthase from Sulfurimonas denitrificans (strain ATCC 33889 / DSM 1251) (Thiomicrospira denitrificans (strain ATCC 33889 / DSM 1251)).